Consider the following 442-residue polypeptide: tRNA-2-methylthio-N(6)-dimethylallyladenosine synthase (442 aa).

The MTTase N-terminal domain maps to 3–120 (KKLYIETHGC…LPEMIDAARI (118 aa)). Cys-12, Cys-49, Cys-83, Cys-157, Cys-161, and Cys-164 together coordinate [4Fe-4S] cluster. Positions 143–375 (RVDGPSAYVS…QHRLNQQGFE (233 aa)) constitute a Radical SAM core domain. The TRAM domain maps to 378–442 (RQMVGSIQRI…PHSLRGSLLQ (65 aa)).

The protein belongs to the methylthiotransferase family. MiaB subfamily. As to quaternary structure, monomer. It depends on [4Fe-4S] cluster as a cofactor.

Its subcellular location is the cytoplasm. It carries out the reaction N(6)-dimethylallyladenosine(37) in tRNA + (sulfur carrier)-SH + AH2 + 2 S-adenosyl-L-methionine = 2-methylsulfanyl-N(6)-dimethylallyladenosine(37) in tRNA + (sulfur carrier)-H + 5'-deoxyadenosine + L-methionine + A + S-adenosyl-L-homocysteine + 2 H(+). Catalyzes the methylthiolation of N6-(dimethylallyl)adenosine (i(6)A), leading to the formation of 2-methylthio-N6-(dimethylallyl)adenosine (ms(2)i(6)A) at position 37 in tRNAs that read codons beginning with uridine. This is tRNA-2-methylthio-N(6)-dimethylallyladenosine synthase from Pseudomonas savastanoi pv. phaseolicola (strain 1448A / Race 6) (Pseudomonas syringae pv. phaseolicola (strain 1448A / Race 6)).